We begin with the raw amino-acid sequence, 604 residues long: UvrABC system protein C (604 aa).

A GIY-YIG domain is found at 12–90 (TAPGVYLMRD…IKQHQPRYNL (79 aa)). A UVR domain is found at 200-235 (KDLVSGFRQRMKEAAEGLHYEEAARWRDLLKAIDTT).

Belongs to the UvrC family. In terms of assembly, interacts with UvrB in an incision complex.

The protein localises to the cytoplasm. In terms of biological role, the UvrABC repair system catalyzes the recognition and processing of DNA lesions. UvrC both incises the 5' and 3' sides of the lesion. The N-terminal half is responsible for the 3' incision and the C-terminal half is responsible for the 5' incision. The sequence is that of UvrABC system protein C from Trichlorobacter lovleyi (strain ATCC BAA-1151 / DSM 17278 / SZ) (Geobacter lovleyi).